A 401-amino-acid chain; its full sequence is Serine/threonine transporter SstT (401 aa).

8 helical membrane-spanning segments follow: residues 17 to 37 (IGIG…ITVI), 40 to 60 (FGSL…LTLV), 78 to 98 (VICL…GASY), 138 to 158 (ALAT…GLAF), 179 to 199 (VVGW…FDTI), 212 to 232 (LLLL…NPLI), 295 to 315 (MAGA…TLGI), and 336 to 356 (ASGV…LFGI).

It belongs to the dicarboxylate/amino acid:cation symporter (DAACS) (TC 2.A.23) family.

The protein resides in the cell membrane. The catalysed reaction is L-serine(in) + Na(+)(in) = L-serine(out) + Na(+)(out). It carries out the reaction L-threonine(in) + Na(+)(in) = L-threonine(out) + Na(+)(out). Functionally, involved in the import of serine and threonine into the cell, with the concomitant import of sodium (symport system). The sequence is that of Serine/threonine transporter SstT from Streptococcus suis (strain 98HAH33).